The chain runs to 860 residues: Transforming growth factor-beta receptor-associated protein 1 (860 aa).

The CNH domain maps to 24 to 297 (RVNIECVECC…HILQDFEGRV (274 aa)). Residues 564–728 (RPLDEQQKNS…LLAIYLHAGP (165 aa)) form a CHCR repeat.

Belongs to the TRAP1 family. In terms of assembly, interacts with TGFBR2 and ACVR2B; in the absence of ligand stimulation. Interacts with TGFBR1, ACVRL1, BMPR1A and ACVR1B; in the absence of ligand stimulation and to a less extent. Interacts with SMAD4; the interaction seems to be mutually exclusive with the interaction of SMAD4 and phosphorylated SMAD2. May interact with ALOX5. Interacts with RAB5C. Interacts with VPS8, VPS11 and VPS16. Component of the putative class C core vacuole/endosome tethering (CORVET) complex; the core of which composed of the class C Vps proteins VPS11, VPS16, VPS18 and VPS33A, is associated with VPS8 and TGFBRAP1.

The protein resides in the cytoplasm. It localises to the early endosome. Plays a role in the TGF-beta/activin signaling pathway. It associates with inactive heteromeric TGF-beta and activin receptor complexes, mainly through the type II receptor, and is released upon activation of signaling. May recruit SMAD4 to the vicinity of the receptor complex and facilitate its interaction with receptor-regulated Smads, such as SMAD2. In terms of biological role, plays a role in vesicle-mediated protein trafficking of the endocytic membrane transport pathway. Believed to act as a component of the putative CORVET endosomal tethering complexes which is proposed to be involved in the Rab5-to-Rab7 endosome conversion probably implicating MON1A/B, and via binding SNAREs and SNARE complexes to mediate tethering and docking events during SNARE-mediated membrane fusion. The CORVET complex is proposed to function as a Rab5 effector to mediate early endosome fusion probably in specific endosome subpopulations. Functions predominantly in APPL1-containing endosomes and in degradative but not recycling trafficking of endocytosed cargo. The polypeptide is Transforming growth factor-beta receptor-associated protein 1 (TGFBRAP1) (Homo sapiens (Human)).